The sequence spans 610 residues: ESX-5 secretion system protein EccA5 (610 aa).

357–364 contacts ATP; the sequence is GPPGTGKT.

The protein belongs to the CbxX/CfxQ family. Part of the ESX-5 / type VII secretion system (T7SS), which is composed of cytosolic and membrane components.

Its subcellular location is the cytoplasm. Functionally, part of an ESX-5 / type VII specialized secretion system (T7SS), which exports several proteins. EccA5 exhibits ATPase activity and may provide energy for the export of ESX-5 substrates. The protein is ESX-5 secretion system protein EccA5 of Mycobacterium bovis (strain ATCC BAA-935 / AF2122/97).